The sequence spans 69 residues: Large ribosomal subunit protein uL29 (69 aa).

It belongs to the universal ribosomal protein uL29 family.

The chain is Large ribosomal subunit protein uL29 from Natronomonas pharaonis (strain ATCC 35678 / DSM 2160 / CIP 103997 / JCM 8858 / NBRC 14720 / NCIMB 2260 / Gabara) (Halobacterium pharaonis).